Consider the following 685-residue polypeptide: E3 ubiquitin ligase Rnf157 (685 aa).

Residue Gly2 is the site of N-myristoyl glycine attachment. An RING-type zinc finger spans residues 276-315 (ECVVCLSDVRDTLILPCRHLCLCNTCADTLRYQANNCPIC). Residues 329–332 (RKKL) carry the D-box 1 motif. Disordered stretches follow at residues 339–361 (SFNP…ENIP), 433–584 (LSKS…AGEQ), and 650–672 (LGGR…EASA). The span at 434–443 (SKSISQNSSV) shows a compositional bias: low complexity. Over residues 478–537 (ESENLTLSSSGAVDQSSCTGTPLSSTISSPEDPASSSLAQSVMSMASSQISTDTVSSMSG) the composition is skewed to polar residues. Over residues 552 to 561 (PSPRAASRAP) the composition is skewed to low complexity. The D-box 2 motif lies at 657–660 (ARPR).

Interacts with APBB1. Interacts with CHD1; CHD1-binding controls RNF157 stability. Also interacts with ATRN, MEGF8, TECR, MSI2, PLRG1, BYSL, MTERF3, PSMA1, MRPS18B, PRPF4, FASTKD2, SLC25A1, SMU1, CNOT9, MRPS2, MAGT1, FXR2, EMD, PSMD8, HDAC1, RAN, HSD17B12, TXNDC5 and MRPL19.

The protein resides in the cytoplasm. It carries out the reaction S-ubiquitinyl-[E2 ubiquitin-conjugating enzyme]-L-cysteine + [acceptor protein]-L-lysine = [E2 ubiquitin-conjugating enzyme]-L-cysteine + N(6)-ubiquitinyl-[acceptor protein]-L-lysine.. E3 ubiquitin ligase that ubiquitinates APBB1 for its degradation by the proteasome and thus prevents apoptosis and promotes survival of neurons. Has a dual role in neurons as it is also required for dendrite growth and maintenance for which its ligase activity is not critical. May act as a scaffold molecule to regulate this process. Acts as a downstream effector of the interconnected PI3K and MAPK signaling pathways and thus participates in the regulation of the cell cycle. The protein is E3 ubiquitin ligase Rnf157 (Rnf157) of Mus musculus (Mouse).